We begin with the raw amino-acid sequence, 302 residues long: tRNA pseudouridine synthase B (302 aa).

The active-site Nucleophile is the D43.

This sequence belongs to the pseudouridine synthase TruB family. Type 1 subfamily.

It catalyses the reaction uridine(55) in tRNA = pseudouridine(55) in tRNA. Its function is as follows. Responsible for synthesis of pseudouridine from uracil-55 in the psi GC loop of transfer RNAs. This is tRNA pseudouridine synthase B from Burkholderia pseudomallei (strain 668).